A 130-amino-acid chain; its full sequence is Small ribosomal subunit protein uS8 (130 aa).

This sequence belongs to the universal ribosomal protein uS8 family. Part of the 30S ribosomal subunit.

One of the primary rRNA binding proteins, it binds directly to 16S rRNA central domain where it helps coordinate assembly of the platform of the 30S subunit. This is Small ribosomal subunit protein uS8 from Pyrobaculum neutrophilum (strain DSM 2338 / JCM 9278 / NBRC 100436 / V24Sta) (Thermoproteus neutrophilus).